The chain runs to 205 residues: Holliday junction branch migration complex subunit RuvA (205 aa).

Positions 1-64 (MIGKLRGIVD…DEAIRLIGFT (64 aa)) are domain I. Positions 65 to 143 (TDSEREWFRL…DSMGLSAALE (79 aa)) are domain II. Residues 144-152 (VGVNGEAVS) form a flexible linker region. Residues 153–205 (SVSAPARDAVSALVNLGYPQAQAMGAVAAAAKRLDDAASTEQLIRHGLKELAR) form a domain III region.

Belongs to the RuvA family. As to quaternary structure, homotetramer. Forms an RuvA(8)-RuvB(12)-Holliday junction (HJ) complex. HJ DNA is sandwiched between 2 RuvA tetramers; dsDNA enters through RuvA and exits via RuvB. An RuvB hexamer assembles on each DNA strand where it exits the tetramer. Each RuvB hexamer is contacted by two RuvA subunits (via domain III) on 2 adjacent RuvB subunits; this complex drives branch migration. In the full resolvosome a probable DNA-RuvA(4)-RuvB(12)-RuvC(2) complex forms which resolves the HJ.

It localises to the cytoplasm. Its function is as follows. The RuvA-RuvB-RuvC complex processes Holliday junction (HJ) DNA during genetic recombination and DNA repair, while the RuvA-RuvB complex plays an important role in the rescue of blocked DNA replication forks via replication fork reversal (RFR). RuvA specifically binds to HJ cruciform DNA, conferring on it an open structure. The RuvB hexamer acts as an ATP-dependent pump, pulling dsDNA into and through the RuvAB complex. HJ branch migration allows RuvC to scan DNA until it finds its consensus sequence, where it cleaves and resolves the cruciform DNA. The polypeptide is Holliday junction branch migration complex subunit RuvA (Parvibaculum lavamentivorans (strain DS-1 / DSM 13023 / NCIMB 13966)).